Consider the following 204-residue polypeptide: High frequency lysogenization protein HflD homolog (204 aa).

It belongs to the HflD family.

The protein localises to the cytoplasm. It is found in the cell inner membrane. This is High frequency lysogenization protein HflD homolog from Xanthomonas axonopodis pv. citri (strain 306).